The sequence spans 157 residues: Transcription inhibitor protein Gfh1 (157 aa).

Residues 1 to 74 (MAREVKLTKA…LEDVLSRAVI (74 aa)) are a coiled coil.

This sequence belongs to the GreA/GreB family. In terms of assembly, interacts with RNAP.

In terms of biological role, inhibits all catalytic activities of RNA polymerase (RNAP) by partially occluding its substrate-binding site and preventing NTP binding. In Thermus aquaticus, this protein is Transcription inhibitor protein Gfh1 (gfh1).